The chain runs to 132 residues: Large ribosomal subunit protein uL14 (132 aa).

This sequence belongs to the universal ribosomal protein uL14 family. In terms of assembly, part of the 50S ribosomal subunit. Forms a cluster with proteins L3 and L24e, part of which may contact the 16S rRNA in 2 intersubunit bridges.

Binds to 23S rRNA. Forms part of two intersubunit bridges in the 70S ribosome. The protein is Large ribosomal subunit protein uL14 of Picrophilus torridus (strain ATCC 700027 / DSM 9790 / JCM 10055 / NBRC 100828 / KAW 2/3).